Reading from the N-terminus, the 264-residue chain is MKQYLDFLKLVKNIGVYKTDRTNTGTTSMFGYQMRFDLSKGFPLVTTKHVHLPSVVYELLWFLNGDTNIKYLQDNGVRIWNEWADENGDLGPVYGTQWRHWKNIKDKSIDQISKVVEQIKNTPNSRRIIVSAWNVGELENMALPPCHVFFQFYVADGKLSCQLYQRSADIFLGVPFNIASYSLLTHMMAQQCDLEVGDFIWSGGDCHIYSNHYKQVEIQLSRTPKALATLKIKRKPENIFDYSFEDFEFVNYIFDAPIKAPVAI.

Position 21 (Arg-21) interacts with dUMP. His-51 serves as a coordination point for (6R)-5,10-methylene-5,6,7,8-tetrahydrofolate. 126 to 127 (RR) lines the dUMP pocket. Cys-146 (nucleophile) is an active-site residue. Residues 166–169 (RSAD), Asn-177, and 207–209 (HIY) contribute to the dUMP site. Asp-169 lines the (6R)-5,10-methylene-5,6,7,8-tetrahydrofolate pocket. Residue Ala-263 participates in (6R)-5,10-methylene-5,6,7,8-tetrahydrofolate binding.

This sequence belongs to the thymidylate synthase family. Bacterial-type ThyA subfamily. As to quaternary structure, homodimer.

Its subcellular location is the cytoplasm. The catalysed reaction is dUMP + (6R)-5,10-methylene-5,6,7,8-tetrahydrofolate = 7,8-dihydrofolate + dTMP. The protein operates within pyrimidine metabolism; dTTP biosynthesis. Catalyzes the reductive methylation of 2'-deoxyuridine-5'-monophosphate (dUMP) to 2'-deoxythymidine-5'-monophosphate (dTMP) while utilizing 5,10-methylenetetrahydrofolate (mTHF) as the methyl donor and reductant in the reaction, yielding dihydrofolate (DHF) as a by-product. This enzymatic reaction provides an intracellular de novo source of dTMP, an essential precursor for DNA biosynthesis. The polypeptide is Thymidylate synthase (Vesicomyosocius okutanii subsp. Calyptogena okutanii (strain HA)).